A 580-amino-acid chain; its full sequence is Zinc finger CCCH domain-containing protein 47 (580 aa).

2 ANK repeats span residues Glu-72–Arg-102 and Glu-107–Ser-139. 2 C3H1-type zinc fingers span residues Pro-251–Phe-278 and Gln-286–Glu-310. The tract at residues Tyr-421–His-451 is disordered.

As to expression, expressed in roots and anthers.

The protein resides in the nucleus. Its function is as follows. Involved in salt stress response. May positively modulate plant tolerance to salt stress. This Arabidopsis thaliana (Mouse-ear cress) protein is Zinc finger CCCH domain-containing protein 47.